Consider the following 428-residue polypeptide: Elongation factor 1-alpha (428 aa).

The tr-type G domain maps to 5-225 (KPVLNVAFIG…DKFQPPEKPT (221 aa)). The tract at residues 14–21 (GHVDAGKS) is G1. Residue 14 to 21 (GHVDAGKS) coordinates GTP. Serine 21 is a binding site for Mg(2+). Residues 70 to 74 (GVTID) are G2. Residues 91-94 (DCPG) are G3. Residues 91–95 (DCPGH) and 149–152 (NKMD) contribute to the GTP site. Positions 149-152 (NKMD) are G4. Residues 189–191 (ASL) are G5.

The protein belongs to the TRAFAC class translation factor GTPase superfamily. Classic translation factor GTPase family. EF-Tu/EF-1A subfamily.

The protein resides in the cytoplasm. The enzyme catalyses GTP + H2O = GDP + phosphate + H(+). GTP hydrolase that promotes the GTP-dependent binding of aminoacyl-tRNA to the A-site of ribosomes during protein biosynthesis. The polypeptide is Elongation factor 1-alpha (Methanocaldococcus jannaschii (strain ATCC 43067 / DSM 2661 / JAL-1 / JCM 10045 / NBRC 100440) (Methanococcus jannaschii)).